The primary structure comprises 629 residues: tRNA uridine 5-carboxymethylaminomethyl modification enzyme MnmG (629 aa).

13 to 18 lines the FAD pocket; that stretch reads GGGHAG. Position 273–287 (273–287) interacts with NAD(+); that stretch reads GPRYCPSIEDKVNRF.

Belongs to the MnmG family. In terms of assembly, homodimer. Heterotetramer of two MnmE and two MnmG subunits. Requires FAD as cofactor.

The protein localises to the cytoplasm. NAD-binding protein involved in the addition of a carboxymethylaminomethyl (cmnm) group at the wobble position (U34) of certain tRNAs, forming tRNA-cmnm(5)s(2)U34. The sequence is that of tRNA uridine 5-carboxymethylaminomethyl modification enzyme MnmG from Shewanella pealeana (strain ATCC 700345 / ANG-SQ1).